The chain runs to 433 residues: MFSLPTLTSDITVEVNSSATKTPFVRRPVEPVGKFFLQHAQRTLRNHTWSEFERIEAEKNVKTVDESNVDPDELLFDTELADEDLLTHDARDWKTADLYAAMGLSKLRFRATESQIIKAHRKQVVKYHPDKQSAAGGSLDQDGFFKIIQKAFETLTDSNKRAQYDSCDFVADVPPPKKGTDYDFYEAWGPVFEAEARFSKKTPIPSLGNKDSSKKEVEQFYAFWHRFDSWRTFEFLDEDVPDDSSNRDHKRYIERKNKAARDKKKTADNARLVKLVERAVSEDPRIKMFKEEEKKEKERRKWEREAGARAEAEAKAKAEAEAKAKAESEAKANASAKADKKKAKEAAKAAKKKNKRAIRNSAKEADYFGDADKATTIDEQVGLIVDSLNDEELVSTADKIKANAAGAKEVLKESAKTIVDSGKLPSSLLSYFV.

Ser-50 carries the post-translational modification Phosphoserine. In terms of domain architecture, J spans 98-170 (LYAAMGLSKL…RAQYDSCDFV (73 aa)). Over residues 292–330 (EEKKEKERRKWEREAGARAEAEAKAKAEAEAKAKAESEA) the composition is skewed to basic and acidic residues. The interval 292–357 (EEKKEKERRK…KAAKKKNKRA (66 aa)) is disordered.

As to quaternary structure, RAC is a heterodimer of the Hsp70/DnaK-type chaperone SSZ1 and the Hsp40/DnaJ-type chaperone ZUO1. RAC associates with ribosomes via ZUO1.

Its subcellular location is the cytoplasm. Component of the ribosome-associated complex (RAC), a heterodimeric chaperone complex involved in regulation of accurate translation termination and in folding or maintaining nascent polypeptides in a folding-competent state. RAC stimulates the ATPase activity of the ribosome-associated pool of Hsp70-type chaperones SSB1/SSB2 that bind to the nascent polypeptide chain. ZUO1 can act as a J-protein for SSB1/SSB2 only when associated with SSZ1. The sequence is that of Zuotin (ZUO1) from Saccharomyces cerevisiae (strain ATCC 204508 / S288c) (Baker's yeast).